Here is a 104-residue protein sequence, read N- to C-terminus: Large ribosomal subunit protein eL42 (104 aa).

This sequence belongs to the eukaryotic ribosomal protein eL42 family. As to quaternary structure, component of the large ribosomal subunit. Mature ribosomes consist of a small (40S) and a large (60S) subunit. The 40S subunit contains about 32 different proteins and 1 molecule of RNA (18S). The 60S subunit contains about 42 different proteins and 3 molecules of RNA (28S, 5.8S and 5S).

It localises to the cytoplasm. In terms of biological role, component of the ribosome, a large ribonucleoprotein complex responsible for the synthesis of proteins in the cell. The small ribosomal subunit (SSU) binds messenger RNAs (mRNAs) and translates the encoded message by selecting cognate aminoacyl-transfer RNA (tRNA) molecules. The large subunit (LSU) contains the ribosomal catalytic site termed the peptidyl transferase center (PTC), which catalyzes the formation of peptide bonds, thereby polymerizing the amino acids delivered by tRNAs into a polypeptide chain. The nascent polypeptides leave the ribosome through a tunnel in the LSU and interact with protein factors that function in enzymatic processing, targeting, and the membrane insertion of nascent chains at the exit of the ribosomal tunnel. This chain is Large ribosomal subunit protein eL42, found in Plasmodium falciparum (isolate 3D7).